The following is a 1606-amino-acid chain: E3 ubiquitin-protein ligase HECW1 (1606 aa).

A C2 domain is found at S182–V318. 4 disordered regions span residues D349–E418, A459–P538, L566–G672, and S730–P815. The span at S354–M373 shows a compositional bias: polar residues. Residues P380–K392 are compositionally biased toward basic and acidic residues. 2 stretches are compositionally biased toward acidic residues: residues E500–D511 and A579–E588. Over residues S589–L600 the composition is skewed to basic and acidic residues. The segment covering A612–E621 has biased composition (acidic residues). Composition is skewed to polar residues over residues H651–R663, D751–G765, and H806–P815. A WW 1 domain is found at E829–A862. Positions R870–S901 form a coiled coil. S874, S937, and S939 each carry phosphoserine. Residues T894–L938 form a disordered region. The 34-residue stretch at L1018–I1051 folds into the WW 2 domain. Residues S1271 to E1606 form the HECT domain. The active-site Glycyl thioester intermediate is the C1574.

In terms of assembly, interacts with DVL1 and SSR3. Also interacts with mutant SOD1. Predominantly expressed in neurons of adult and fetal brain. Weakly expressed in the kidney.

The protein localises to the cytoplasm. The catalysed reaction is S-ubiquitinyl-[E2 ubiquitin-conjugating enzyme]-L-cysteine + [acceptor protein]-L-lysine = [E2 ubiquitin-conjugating enzyme]-L-cysteine + N(6)-ubiquitinyl-[acceptor protein]-L-lysine.. It functions in the pathway protein modification; protein ubiquitination. Its function is as follows. E3 ubiquitin-protein ligase that mediates ubiquitination and subsequent degradation of DVL1. Also targets the mutant SOD1 protein involved in familial amyotrophic lateral sclerosis (FALS). Forms cytotoxic aggregates with DVL1, SSR3 and mutant SOD1 that lead to motor neuron death in FALS. The polypeptide is E3 ubiquitin-protein ligase HECW1 (HECW1) (Homo sapiens (Human)).